The chain runs to 816 residues: tRNA(Met) cytidine acetyltransferase TmcA (816 aa).

ATP contacts are provided by Gln265 and Arg439. One can recognise an N-acetyltransferase domain in the interval 469–664 (ELIRKMEVYL…YTAIVIKPIS (196 aa)). Residues 589 to 591 (IAT), Glu629, and Arg636 each bind acetyl-CoA.

The protein belongs to the TmcA family.

The protein resides in the cytoplasm. It carries out the reaction cytidine(34) in elongator tRNA(Met) + acetyl-CoA + ATP + H2O = N(4)-acetylcytidine(34) in elongator tRNA(Met) + ADP + phosphate + CoA + H(+). It catalyses the reaction a cytidine in RNA + acetyl-CoA + ATP + H2O = an N(4)-acetylcytidine in RNA + ADP + phosphate + CoA + H(+). The catalysed reaction is a cytidine in tRNA + acetyl-CoA + ATP + H2O = an N(4)-acetylcytidine in tRNA + ADP + phosphate + CoA + H(+). The enzyme catalyses a cytidine in mRNA + acetyl-CoA + ATP + H2O = an N(4)-acetylcytidine in mRNA + ADP + phosphate + CoA + H(+). Catalyzes the formation of N(4)-acetylcytidine (ac(4)C) at the wobble position of tRNA(Met), by using acetyl-CoA as an acetyl donor and ATP (or GTP). Its function is as follows. Catalyzes the formation of 233 N(4)-acetylcytidine (ac(4)C) sites in RNA, on the middle C of a CCG motif. Modifications are found in rRNA, ncRNA, mRNA and tRNA. More acetylation is observed at 85 than at 65 or 75 degrees Celsius. This Pyrococcus furiosus (strain ATCC 43587 / DSM 3638 / JCM 8422 / Vc1) protein is tRNA(Met) cytidine acetyltransferase TmcA.